The sequence spans 267 residues: 4-hydroxy-tetrahydrodipicolinate reductase (267 aa).

An NAD(+)-binding site is contributed by 8-13 (GAAGRM). R35 provides a ligand contact to NADP(+). Residues 98-100 (GTT) and 122-125 (AANF) each bind NAD(+). Catalysis depends on H155, which acts as the Proton donor/acceptor. H156 contributes to the (S)-2,3,4,5-tetrahydrodipicolinate binding site. K159 serves as the catalytic Proton donor. 165–166 (GT) serves as a coordination point for (S)-2,3,4,5-tetrahydrodipicolinate.

The protein belongs to the DapB family.

Its subcellular location is the cytoplasm. The catalysed reaction is (S)-2,3,4,5-tetrahydrodipicolinate + NAD(+) + H2O = (2S,4S)-4-hydroxy-2,3,4,5-tetrahydrodipicolinate + NADH + H(+). It catalyses the reaction (S)-2,3,4,5-tetrahydrodipicolinate + NADP(+) + H2O = (2S,4S)-4-hydroxy-2,3,4,5-tetrahydrodipicolinate + NADPH + H(+). Its pathway is amino-acid biosynthesis; L-lysine biosynthesis via DAP pathway; (S)-tetrahydrodipicolinate from L-aspartate: step 4/4. Functionally, catalyzes the conversion of 4-hydroxy-tetrahydrodipicolinate (HTPA) to tetrahydrodipicolinate. This is 4-hydroxy-tetrahydrodipicolinate reductase from Azotobacter vinelandii (strain DJ / ATCC BAA-1303).